The chain runs to 433 residues: ATP-dependent protease ATPase subunit HslU (433 aa).

Residues V18, 60 to 65 (GVGKTE), D246, E311, and R383 each bind ATP.

Belongs to the ClpX chaperone family. HslU subfamily. In terms of assembly, a double ring-shaped homohexamer of HslV is capped on each side by a ring-shaped HslU homohexamer. The assembly of the HslU/HslV complex is dependent on binding of ATP.

The protein resides in the cytoplasm. In terms of biological role, ATPase subunit of a proteasome-like degradation complex; this subunit has chaperone activity. The binding of ATP and its subsequent hydrolysis by HslU are essential for unfolding of protein substrates subsequently hydrolyzed by HslV. HslU recognizes the N-terminal part of its protein substrates and unfolds these before they are guided to HslV for hydrolysis. The sequence is that of ATP-dependent protease ATPase subunit HslU from Rhodopseudomonas palustris (strain TIE-1).